The sequence spans 3848 residues: Intermembrane lipid transfer protein tipC (3848 aa).

Residues H4–L112 enclose the Chorein N-terminal domain. Disordered regions lie at residues I243–E268, L450–G481, Q966–L985, K1174–S1219, E1326–T1345, E1907–T1926, D2024–P2047, I2209–L2290, F2330–L2353, K2509–G2541, G3209–D3228, and I3310–Q3342. Low complexity-rich tracts occupy residues Q251–G260 and L452–S477. Positions N1175–N1190 are enriched in low complexity. Over residues I1191 to I1200 the composition is skewed to polar residues. Over residues S1202–L1211 the composition is skewed to pro residues. The segment covering T1333–T1345 has biased composition (low complexity). Low complexity-rich tracts occupy residues D2029–N2044, N2217–N2289, and S2335–L2353. Low complexity-rich tracts occupy residues N3212–D3228 and N3311–Q3342.

Belongs to the VPS13 family.

Its subcellular location is the membrane. Mediates the transfer of lipids between membranes at organelle contact sites. This is Intermembrane lipid transfer protein tipC (tipC) from Dictyostelium discoideum (Social amoeba).